The sequence spans 115 residues: Holo-[acyl-carrier-protein] synthase (115 aa).

Residues Asp8 and Glu50 each coordinate Mg(2+).

The protein belongs to the P-Pant transferase superfamily. AcpS family. The cofactor is Mg(2+).

It is found in the cytoplasm. The catalysed reaction is apo-[ACP] + CoA = holo-[ACP] + adenosine 3',5'-bisphosphate + H(+). Transfers the 4'-phosphopantetheine moiety from coenzyme A to a Ser of acyl-carrier-protein. The sequence is that of Holo-[acyl-carrier-protein] synthase from Renibacterium salmoninarum (strain ATCC 33209 / DSM 20767 / JCM 11484 / NBRC 15589 / NCIMB 2235).